The primary structure comprises 445 residues: Transcriptional enhancer factor TEF-4 (445 aa).

2 disordered regions span residues 1-47 (MGDP…VWSP) and 191-217 (PPAS…SPPA). Residues 25–37 (EGTGGSEGVGGDG) show a composition bias toward gly residues. The segment at residues 38–114 (SPDAEGVWSP…QVLARRKSRE (77 aa)) is a DNA-binding region (TEA). A transcriptional activation region spans residues 172–445 (WNVPDVKPFS…QYHIYRLVRD (274 aa)). A compositionally biased stretch (pro residues) spans 199–216 (YEPPPALSPLPPPAPSPP).

As to quaternary structure, interacts with YAP1 and WWTR1/TAZ. As to expression, highest expression in brain. High levels also found in lung, testis and ovarian follicle cells. Lower levels in heart and spleen.

It is found in the nucleus. Its function is as follows. Transcription factor which plays a key role in the Hippo signaling pathway, a pathway involved in organ size control and tumor suppression by restricting proliferation and promoting apoptosis. The core of this pathway is composed of a kinase cascade wherein MST1/MST2, in complex with its regulatory protein SAV1, phosphorylates and activates LATS1/2 in complex with its regulatory protein MOB1, which in turn phosphorylates and inactivates YAP1 oncoprotein and WWTR1/TAZ. Acts by mediating gene expression of YAP1 and WWTR1/TAZ, thereby regulating cell proliferation, migration and epithelial mesenchymal transition (EMT) induction. Binds to the SPH and GT-IIC 'enhansons' (5'-GTGGAATGT-3'). May be involved in the gene regulation of neural development. Binds to the M-CAT motif. The sequence is that of Transcriptional enhancer factor TEF-4 (Tead2) from Mus musculus (Mouse).